The sequence spans 271 residues: 3-methyl-2-oxobutanoate hydroxymethyltransferase (271 aa).

D53 and D92 together coordinate Mg(2+). 3-methyl-2-oxobutanoate contacts are provided by residues 53-54 (DS), D92, and K120. E122 serves as a coordination point for Mg(2+). The active-site Proton acceptor is E189.

This sequence belongs to the PanB family. As to quaternary structure, homodecamer; pentamer of dimers. It depends on Mg(2+) as a cofactor.

It is found in the cytoplasm. It carries out the reaction 3-methyl-2-oxobutanoate + (6R)-5,10-methylene-5,6,7,8-tetrahydrofolate + H2O = 2-dehydropantoate + (6S)-5,6,7,8-tetrahydrofolate. It functions in the pathway cofactor biosynthesis; (R)-pantothenate biosynthesis; (R)-pantoate from 3-methyl-2-oxobutanoate: step 1/2. Catalyzes the reversible reaction in which hydroxymethyl group from 5,10-methylenetetrahydrofolate is transferred onto alpha-ketoisovalerate to form ketopantoate. The polypeptide is 3-methyl-2-oxobutanoate hydroxymethyltransferase (Burkholderia multivorans (strain ATCC 17616 / 249)).